The following is a 95-amino-acid chain: Aspartyl/glutamyl-tRNA(Asn/Gln) amidotransferase subunit C (95 aa).

This sequence belongs to the GatC family. Heterotrimer of A, B and C subunits.

The catalysed reaction is L-glutamyl-tRNA(Gln) + L-glutamine + ATP + H2O = L-glutaminyl-tRNA(Gln) + L-glutamate + ADP + phosphate + H(+). It catalyses the reaction L-aspartyl-tRNA(Asn) + L-glutamine + ATP + H2O = L-asparaginyl-tRNA(Asn) + L-glutamate + ADP + phosphate + 2 H(+). In terms of biological role, allows the formation of correctly charged Asn-tRNA(Asn) or Gln-tRNA(Gln) through the transamidation of misacylated Asp-tRNA(Asn) or Glu-tRNA(Gln) in organisms which lack either or both of asparaginyl-tRNA or glutaminyl-tRNA synthetases. The reaction takes place in the presence of glutamine and ATP through an activated phospho-Asp-tRNA(Asn) or phospho-Glu-tRNA(Gln). The polypeptide is Aspartyl/glutamyl-tRNA(Asn/Gln) amidotransferase subunit C (Chlorobium luteolum (strain DSM 273 / BCRC 81028 / 2530) (Pelodictyon luteolum)).